Here is a 164-residue protein sequence, read N- to C-terminus: Crossover junction endodeoxyribonuclease RuvC (164 aa).

Residues Asp7, Glu67, and Asp140 contribute to the active site. Mg(2+) is bound by residues Asp7, Glu67, and Asp140.

It belongs to the RuvC family. Homodimer which binds Holliday junction (HJ) DNA. The HJ becomes 2-fold symmetrical on binding to RuvC with unstacked arms; it has a different conformation from HJ DNA in complex with RuvA. In the full resolvosome a probable DNA-RuvA(4)-RuvB(12)-RuvC(2) complex forms which resolves the HJ. The cofactor is Mg(2+).

The protein localises to the cytoplasm. The catalysed reaction is Endonucleolytic cleavage at a junction such as a reciprocal single-stranded crossover between two homologous DNA duplexes (Holliday junction).. Its function is as follows. The RuvA-RuvB-RuvC complex processes Holliday junction (HJ) DNA during genetic recombination and DNA repair. Endonuclease that resolves HJ intermediates. Cleaves cruciform DNA by making single-stranded nicks across the HJ at symmetrical positions within the homologous arms, yielding a 5'-phosphate and a 3'-hydroxyl group; requires a central core of homology in the junction. The consensus cleavage sequence is 5'-(A/T)TT(C/G)-3'. Cleavage occurs on the 3'-side of the TT dinucleotide at the point of strand exchange. HJ branch migration catalyzed by RuvA-RuvB allows RuvC to scan DNA until it finds its consensus sequence, where it cleaves and resolves the cruciform DNA. This Pelotomaculum thermopropionicum (strain DSM 13744 / JCM 10971 / SI) protein is Crossover junction endodeoxyribonuclease RuvC.